A 76-amino-acid chain; its full sequence is MSLTRCPECRKKISENAENCPNCGFSFKQKDLEMYKQRLEARRLHNEEVNRKSTKLHIIWFCIFAIFIAVTSWMVN.

Residues 53 to 70 form a helical membrane-spanning segment; it reads STKLHIIWFCIFAIFIAV.

The protein localises to the membrane. This is an uncharacterized protein from Haemophilus influenzae (strain ATCC 51907 / DSM 11121 / KW20 / Rd).